The sequence spans 174 residues: Gamma-crystallin C (174 aa).

2 Beta/gamma crystallin 'Greek key' domains span residues 2 to 40 (GKIT…RVES) and 41 to 83 (GCWM…CLIP). Cys23 bears the S-methylcysteine mark. Positions 84–87 (QTVS) are connecting peptide. Beta/gamma crystallin 'Greek key' domains are found at residues 88-128 (HRLR…HVLE) and 129-171 (GCWV…RRVV).

The protein belongs to the beta/gamma-crystallin family. As to quaternary structure, monomer.

Its function is as follows. Crystallins are the dominant structural components of the vertebrate eye lens. This chain is Gamma-crystallin C (CRYGC), found in Homo sapiens (Human).